Reading from the N-terminus, the 444-residue chain is Interferon-induced protein 44 (444 aa).

Residues 1–152 (MAVTTRLTWL…IQDYEVFRCE (152 aa)) enclose the TLDc domain.

It belongs to the IFI44 family.

The protein localises to the cytoplasm. This protein aggregates to form microtubular structures. The polypeptide is Interferon-induced protein 44 (IFI44) (Homo sapiens (Human)).